Here is a 394-residue protein sequence, read N- to C-terminus: Protein DDI1 homolog 2 (394 aa).

Residues 1–81 (MLITVYCVRR…VILRQRETPE (81 aa)) enclose the Ubiquitin-like domain. The segment at 82–128 (ARPAAPFPGLDFSTIAVPGSSSQPAPSQPQAPPPPPPDTSSFPQGLD) is disordered. Pro residues predominate over residues 107–119 (PSQPQAPPPPPPD). The active site involves aspartate 247. A Ubiquitin-binding motif is present at residues 371-390 (EEIADRELAEVLQKSAEEAD).

It belongs to the DDI1 family. Homodimer.

The protein resides in the cytoplasm. It is found in the cytosol. Its subcellular location is the chromosome. In terms of biological role, aspartic protease that mediates the cleavage of NFE2L1/NRF1 at 'Leu-104', thereby promoting release of NFE2L1/NRF1 from the endoplasmic reticulum membrane. Ubiquitination of NFE2L1/NRF1 is a prerequisite for cleavage, suggesting that DDI2 specifically recognizes and binds ubiquitinated NFE2L1/NRF1. Seems to act as a proteasomal shuttle which links the proteasome and replication fork proteins like RTF2. Required for cellular survival following replication stress. In Xenopus tropicalis (Western clawed frog), this protein is Protein DDI1 homolog 2 (ddi2).